Consider the following 1133-residue polypeptide: MAPKTKKGCKVTLPEKPVKLASHTRDTTGVSQMFPSSKARTKSLLGDDVFSTMAGLEEADAEVSGISEADPQALLQAMKDLDGMDADILGLKKSNSAPSKKAAKDPGKGELPNHPKPAGGAIPTKKSLPSPSSSGHQNRRFSSEDLEDPLRGLLSYDEGGITKQPPVTQSKTASDKSPSTVRDQGPSIPLTPGDTPIRKKEELLFDDGDDIMATLGFGDSPKAEKRQIGDQEGPRPARSTLDELLGRGMATKLLARPGTGEHREFKLDKKYQRPQDSEDMWGDEDFTFGAYQPTVVSSEGRQSRRQSVSRFFADSGADPKGEPGSKQSPPMASSPIQPRKGGADWLGLKDEDLDLFPASPTREAHRESSVPVTPSVPPPASQHSTPAGLPPSRAKPPTEGAGSPAKASQASKLRASKEEKEDWLSHALSRKKSQGLAREQHAGTSEGLHLAGTAGHPPSGSQPLTSTQGLEHAAAGGSSGTTARERPCVRPGVSGSPVTQNHAASALPTGSPKRGTAPGDLSATEPATCFPSTQKPTEPSVPVQPLLPESLARSLLPSTEYQKQLLAAQVQLQCSPAELQAELLHSQARLAELEAQVRKLELERAQHELLLGSLQQQHQADLELIESAHRSRIKVLETSYQQREERLRRENEELSARYLSQCQEAEQARAELTAQHQRRLAAIAQEKDQEMERLRELQRASILDMRRDHEEQLQRLKLLKDREVDAATSATSHTRSLNSIIHQMEKFSSSLHELSSRVEASHLTTSQERELGIRQRDEQLRALQERLGQQQRDMEEERSRQQEVIGKMEARLNEQSRLLEQERWRVTAEQSKAESMQRALEEQRKVTAQQMAMERAELERAKSALLEEQKSVMLKCGEERRRLAAEWAEFSAQQKLSKERAEREAERALQVDTQREGTLISLAKQAELKIRASELRAEEKQLAAERAALEQERQELRLEKERINATALRVKLRAEEVESMSKVASEKYEEGERALREAQQVQAEQQARLQAVQQQQERLRKQEQHMHQEHLSLAQQRLQLDRARQDLPSSLVGLFPRAQGPAASSQSALMPPAPTTRWCSQPPTGLDPSPLHLHARLALLRHMAEQDRDFLENEQFFLETLKKGSYNLTSHSA.

2 disordered regions span residues 89–198 (LGLK…TPIR) and 211–544 (IMAT…VPVQ). The span at 102–113 (AAKDPGKGELPN) shows a compositional bias: basic and acidic residues. Over residues 125–134 (KKSLPSPSSS) the composition is skewed to low complexity. Ser142 bears the Phosphoserine mark. Residues 165–182 (PPVTQSKTASDKSPSTVR) are compositionally biased toward polar residues. 2 stretches are compositionally biased toward basic and acidic residues: residues 221 to 245 (PKAE…DELL) and 259 to 276 (TGEH…RPQD). Residues 277–286 (SEDMWGDEDF) are compositionally biased toward acidic residues. Positions 295 to 310 (VVSSEGRQSRRQSVSR) are enriched in low complexity. Residues 325–336 (SKQSPPMASSPI) are compositionally biased toward polar residues. Residues 415–424 (ASKEEKEDWL) are compositionally biased toward basic and acidic residues. The span at 459-469 (SGSQPLTSTQG) shows a compositional bias: polar residues. The segment covering 473–482 (AAAGGSSGTT) has biased composition (low complexity). 2 coiled-coil regions span residues 577 to 727 (AELQ…VDAA) and 773 to 870 (IRQR…EEQK). Lys960 is covalently cross-linked (Glycyl lysine isopeptide (Lys-Gly) (interchain with G-Cter in SUMO2)). Residues 1062–1085 (AASSQSALMPPAPTTRWCSQPPTG) form a disordered region.

May interact with FAS cytoplasmic domain. Interacts with PARD3. Interacts with TRAPPC14. As to expression, present in various epithelial cells (at protein level).

The protein resides in the cytoplasm. Its subcellular location is the cytoskeleton. It is found in the microtubule organizing center. The protein localises to the centrosome. It localises to the centriole. The protein resides in the spindle pole. Its subcellular location is the cell junction. Its function is as follows. Keratin-binding protein required for epithelial cell polarization. Involved in apical junction complex (AJC) assembly via its interaction with PARD3. Required for ciliogenesis. This chain is Fas-binding factor 1 (FBF1), found in Homo sapiens (Human).